Here is a 643-residue protein sequence, read N- to C-terminus: MHGLLLAGLLALPLNVLAHPTESHSSGISRRAIDITSYRLPQISKYTKSDAVPKQDDESFTTSSTGDDNVSSGDYVTTATDWLKKTLPKATYRLVNDHYIGDSGIGHVHFRQTAHGIDIDNTDFNVNIGRDGKVFSFGNSFYDGEIPKANPMVKRDFSDPVNALQVAIQTLNLPVTAKPENVKAKPVEGKENFKFEGTSGAFSDPKAQLVYLQKDGGLVPSWKVETDIGDNWLLTYVDANKNDKVHSVVDYVSAAEYKVYPWGINDPTEGNRTSIHLPWFKTLSTDWHIDGKGWYSTTRGNNAIAQENPTGGPEYENNYRPKSPLFIFKYPYSEAMTPPSSYRDASITQLFYTTNVYHDVLYILGFNEKAGNFQVNNWNKGGVGGDFAILNSQDGSGVNNANFATPPDGQPGRMRMYTWNASTPERDGCFEAGIVIHEYTHGVSNRLTGGPANSRCLAALESGGMGEGWSDFFATAIRLKAGDTRATDYTMGEWASNRPNGIRKYRYSTNLTTNPHMYVDADGLTSVHAIGTIWASMLYELLWNLIDKHGKGDVTKVRPVLKNGVPTDGRHLAMKLVLDGMALQPCLPNFVQARDAILDADKVLTQGSNKCEIWKAFAKRGLGVGAVFNPSKRTGSNELPAGC.

A signal peptide spans 1-18 (MHGLLLAGLLALPLNVLA). Residues 19–254 (HPTESHSSGI…VHSVVDYVSA (236 aa)) constitute a propeptide that is removed on maturation. Positions 47–57 (TKSDAVPKQDD) are enriched in basic and acidic residues. The tract at residues 47–71 (TKSDAVPKQDDESFTTSSTGDDNVS) is disordered. Polar residues predominate over residues 60–71 (FTTSSTGDDNVS). 2 N-linked (GlcNAc...) asparagine glycosylation sites follow: Asn-271 and Asn-420. His-437 is a Zn(2+) binding site. Residue Glu-438 is part of the active site. His-441 is a binding site for Zn(2+). An N-linked (GlcNAc...) asparagine glycan is attached at Asn-510.

It belongs to the peptidase M36 family. Requires Zn(2+) as cofactor.

Its subcellular location is the secreted. Secreted metalloproteinase probably acting as a virulence factor. The polypeptide is Extracellular metalloproteinase 4 (MEP4) (Trichophyton equinum (Horse ringworm fungus)).